We begin with the raw amino-acid sequence, 94 residues long: Small ribosomal subunit protein bS18 (94 aa).

It belongs to the bacterial ribosomal protein bS18 family. As to quaternary structure, part of the 30S ribosomal subunit. Forms a tight heterodimer with protein bS6.

Its function is as follows. Binds as a heterodimer with protein bS6 to the central domain of the 16S rRNA, where it helps stabilize the platform of the 30S subunit. The sequence is that of Small ribosomal subunit protein bS18 from Polaromonas sp. (strain JS666 / ATCC BAA-500).